Here is a 643-residue protein sequence, read N- to C-terminus: SURP and G-patch domain-containing protein 1 (643 aa).

2 disordered regions span residues 48-69 (ARMEQKARQSHVPSPQPPHPGE) and 97-119 (KAQTSTDSAPRAPPSMPTPSSLK). Thr-128 bears the Phosphothreonine mark. One copy of the SURP motif 1 repeat lies at 187 to 229 (VIEKLARFVAEGGPELEKVAMEDYKDNPAFTFLHDKNSREFLY). The residue at position 252 (Ser-252) is a Phosphoserine. One copy of the SURP motif 2 repeat lies at 262–305 (LAEKLARFIADGGPEVETIALQNNRENQAFSFLYDPNSQGYRYY). Disordered stretches follow at residues 316 to 335 (KAGSTGSFPAPAPNPSLRRK) and 360 to 393 (AVNPTPSIPGKPTATAAVKRKRKSRWGPEEDKVE). Ser-322 bears the Phosphoserine mark. The short motif at 378–384 (KRKRKSR) is the Nuclear localization signal element. Residues Ser-407, Ser-409, Ser-412, and Ser-483 each carry the phosphoserine modification. The G-patch domain maps to 560–607 (VENIGYQMLMKMGWKEGEGLGTEGQGIKNPVNKGATTIDGAGFGIDRP).

As to quaternary structure, component of the spliceosome.

It localises to the nucleus. Its function is as follows. Plays a role in pre-mRNA splicing. The sequence is that of SURP and G-patch domain-containing protein 1 (Sugp1) from Mus musculus (Mouse).